The chain runs to 28 residues: Toxin a (28 aa).

Residues 3 to 28 form the LCN-type CS-alpha/beta domain; sequence VPGNYPLDSYGNCYPCTILGDNQYCI.

It belongs to the long (3 C-C) scorpion toxin superfamily. As to expression, expressed by the venom gland.

It is found in the secreted. Functionally, binds to sodium channels (Nav) and affects the channel activation process. The sequence is that of Toxin a from Androctonus crassicauda (Arabian fat-tailed scorpion).